Here is a 321-residue protein sequence, read N- to C-terminus: Fe-S cluster assembly protein DRE2 (321 aa).

The interval Met1–Val131 is N-terminal SAM-like domain. The segment at Pro132–Met213 is linker. [2Fe-2S] cluster is bound by residues Cys223, Cys234, Cys237, and Cys239. The tract at residues Cys223–Cys239 is fe-S binding site A. [4Fe-4S] cluster is bound by residues Cys284, Cys287, Cys295, and Cys298. Short sequence motifs (cx2C motif) lie at residues Cys284–Cys287 and Cys295–Cys298. Positions Cys284–Cys298 are fe-S binding site B.

The protein belongs to the anamorsin family. Monomer. Interacts with TAH18. Interacts with MIA40. [2Fe-2S] cluster serves as cofactor. The cofactor is [4Fe-4S] cluster.

The protein localises to the cytoplasm. It is found in the mitochondrion intermembrane space. Its function is as follows. Component of the cytosolic iron-sulfur (Fe-S) protein assembly (CIA) machinery required for the maturation of extramitochondrial Fe-S proteins. Part of an electron transfer chain functioning in an early step of cytosolic Fe-S biogenesis, facilitating the de novo assembly of a [4Fe-4S] cluster on the scaffold complex CFD1-NBP35. Electrons are transferred to DRE2 from NADPH via the FAD- and FMN-containing protein TAH18. TAH18-DRE2 are also required for the assembly of the diferric tyrosyl radical cofactor of ribonucleotide reductase (RNR), probably by providing electrons for reduction during radical cofactor maturation in the catalytic small subunit RNR2. This Coccidioides posadasii (strain C735) (Valley fever fungus) protein is Fe-S cluster assembly protein DRE2.